The chain runs to 568 residues: MDQDAFILKEDSEVEREAPGGRESLSDVIGFLDAVLSSEPTDIGGDRSWLHNTINTPQGPGSAHRAKSEGEGEVSTPSTQDNRSGEESRVSGRTSKPEAEAHAGNLDKQNIHRAFGGRTGTNSVSQDLGDGGDSGILENPPNERGYPRSGIEDENREMAAHPDKRGEDQAEGLPEEVRGSTSLPDEGEGGASNNGRSMEPGSSHSARVTGVLVIPSPELEEAVLRRNKRRPTNSGSKPLTPATVPGTRSPPLNRYNSTGSPPGKPPSTQDEHINSGDTPAVRVKDRKPPIGTRSVSDCPANGRSIHPGLETDSTKKGIGENTSSMKEMATLLTSLGVIQSAQEFESSRDASYVFARRALKSANYAEMTFNVCGLILSAEKSSARKVDENKQLLKQIQESVESFRDTYKRFSEYQKEQNSLLMSNLSTLHIITDRGGKTDNTDSLTRSPSVFAKSKENKTKATRFDPSMETLEDMKYKPDLIREDEFRDEIRNPVYQERDTEPRASNASRLLPSKEKPTMHSLRLVIESSPLSRAEKAAYVKSLSKCKTDQEVKAVMELVEEDIESLTN.

Disordered stretches follow at residues 1-23 and 38-320; these read MDQD…GGRE and SEPT…GIGE. Basic and acidic residues predominate over residues 7–20; it reads ILKEDSEVEREAPG. An N0 binding region spans residues 33–41; the sequence is DAVLSSEPT. The segment covering 50–59 has biased composition (polar residues); the sequence is LHNTINTPQG. Phosphoserine; by host is present on Ser-68. Basic and acidic residues predominate over residues 83-101; sequence RSGEESRVSGRTSKPEAEA. Ser-125 carries the post-translational modification Phosphoserine; by host. The span at 150–168 shows a compositional bias: basic and acidic residues; it reads GIEDENREMAAHPDKRGED. Residues 191–206 are compositionally biased toward polar residues; sequence ASNNGRSMEPGSSHSA. Phosphoserine; by host is present on residues Ser-192, Ser-249, Ser-257, and Ser-260. The interval 344–411 is multimerization; sequence FESSRDASYV…SFRDTYKRFS (68 aa). Residues 364–429 are a coiled coil; that stretch reads YAEMTFNVCG…LLMSNLSTLH (66 aa). A l protein binding region spans residues 412–445; that stretch reads EYQKEQNSLLMSNLSTLHIITDRGGKTDNTDSLT. 2 positions are modified to phosphoserine; by host: Ser-447 and Ser-449. Positions 479–568 are interaction with the nucleocapsid (N-RNA); it reads DLIREDEFRD…VEEDIESLTN (90 aa). Residues 496 to 516 are disordered; it reads QERDTEPRASNASRLLPSKEK.

This sequence belongs to the respirovirus P protein family. In terms of assembly, homotetramer. Interacts (via multimerization domain) with polymerase L; this interaction forms the polymerase complex. Interacts (via N-terminus) with N0; this interaction allows P to chaperon N0 before encapsidation and form the N-P complex. Interacts (via C-terminus) with N-RNA template; this interaction positions the polymerase on the template. Post-translationally, phosphorylated by PKC/PRKCZ, and other unknown kinases. Phosphorylation is necessary for viral transcription and replication. The N-terminus contains the majority of phosphorylated sites. Ser-249 is the major site of phosphorylation, but is not necessary for most functions.

Its function is as follows. Essential cofactor of the RNA polymerase L that plays a central role in the transcription and replication by forming the polymerase complex with RNA polymerase L and recruiting L to the genomic N-RNA template for RNA synthesis. Also plays a central role in the encapsidation of nascent RNA chains by forming the encapsidation complex with the nucleocapsid protein N (N-P complex). Acts as a chaperone for newly synthesized free N protein, so-called N0, allowing encapsidation of nascent RNA chains during replication. The nucleoprotein protein N prevents excessive phosphorylation of P, which leads to down-regulation of viral transcription/ replication. Participates, together with N, in the formation of viral factories (viroplasms), which are large inclusions in the host cytoplasm where replication takes place. Recruits host PI4KB and remodel the host endoplasmic reticulum membrane to form viral replication factories. The chain is Phosphoprotein (P/V/C) from Sendai virus (strain Z) (SeV).